We begin with the raw amino-acid sequence, 449 residues long: UDP-N-acetylmuramoylalanine--D-glutamate ligase (449 aa).

118 to 124 (GTNGKTT) contacts ATP.

Belongs to the MurCDEF family.

The protein localises to the cytoplasm. It carries out the reaction UDP-N-acetyl-alpha-D-muramoyl-L-alanine + D-glutamate + ATP = UDP-N-acetyl-alpha-D-muramoyl-L-alanyl-D-glutamate + ADP + phosphate + H(+). It participates in cell wall biogenesis; peptidoglycan biosynthesis. In terms of biological role, cell wall formation. Catalyzes the addition of glutamate to the nucleotide precursor UDP-N-acetylmuramoyl-L-alanine (UMA). In Staphylococcus carnosus (strain TM300), this protein is UDP-N-acetylmuramoylalanine--D-glutamate ligase.